A 122-amino-acid polypeptide reads, in one-letter code: Large ribosomal subunit protein uL14 (122 aa).

The protein belongs to the universal ribosomal protein uL14 family. In terms of assembly, part of the 50S ribosomal subunit. Forms a cluster with proteins L3 and L19. In the 70S ribosome, L14 and L19 interact and together make contacts with the 16S rRNA in bridges B5 and B8.

Its function is as follows. Binds to 23S rRNA. Forms part of two intersubunit bridges in the 70S ribosome. The chain is Large ribosomal subunit protein uL14 from Dehalococcoides mccartyi (strain ATCC BAA-2100 / JCM 16839 / KCTC 5957 / BAV1).